A 141-amino-acid chain; its full sequence is Nucleoside diphosphate kinase (141 aa).

ATP-binding residues include K11, F59, R87, T93, R104, and N114. H117 serves as the catalytic Pros-phosphohistidine intermediate.

Belongs to the NDK family. In terms of assembly, homotetramer. It depends on Mg(2+) as a cofactor.

Its subcellular location is the cytoplasm. It carries out the reaction a 2'-deoxyribonucleoside 5'-diphosphate + ATP = a 2'-deoxyribonucleoside 5'-triphosphate + ADP. The catalysed reaction is a ribonucleoside 5'-diphosphate + ATP = a ribonucleoside 5'-triphosphate + ADP. Its function is as follows. Major role in the synthesis of nucleoside triphosphates other than ATP. The ATP gamma phosphate is transferred to the NDP beta phosphate via a ping-pong mechanism, using a phosphorylated active-site intermediate. The chain is Nucleoside diphosphate kinase from Azoarcus sp. (strain BH72).